The chain runs to 340 residues: Cytochrome c peroxidase, mitochondrial (340 aa).

The N-terminal 17 residues, 1–17 (MRSFRAVRNFSTTAKRL), are a transit peptide targeting the mitochondrion. H101 serves as the catalytic Proton acceptor. The interval 175 to 198 (WKRGRVDEPESASPPDGSLPDASQ) is disordered. Residue H224 participates in heme b binding. The active-site Tryptophan radical intermediate is W240.

Belongs to the peroxidase family. Cytochrome c peroxidase subfamily. As to quaternary structure, forms a one-to-one complex with cytochrome c. Heme b is required as a cofactor.

The protein resides in the mitochondrion matrix. The protein localises to the mitochondrion intermembrane space. The catalysed reaction is 2 Fe(II)-[cytochrome c] + H2O2 + 2 H(+) = 2 Fe(III)-[cytochrome c] + 2 H2O. In terms of biological role, destroys radicals which are normally produced within the cells and which are toxic to biological systems. The polypeptide is Cytochrome c peroxidase, mitochondrial (CCP1) (Yarrowia lipolytica (strain CLIB 122 / E 150) (Yeast)).